The primary structure comprises 834 residues: MEDPAAPGTGGPPANGNGNGGGKGKQAAPKGREAFRSQRRESEGSVDCPTLEFEYGDADGHAAELSELYSYTENLEFTNNRRCFEEDFKTQVQGKEWLELEEDAQKAYIMGLLDRLEVVSRERRLKVARAVLYLAQGTFGECDSEVDVLHWSRYNCFLLYQMGTFSTFLELLHMEIDNSQACSSALRKPAVSIADSTELRVLLSVMYLMVENIRLERETDPCGWRTARETFRTELSFSMHNEEPFALLLFSMVTKFCSGLAPHFPIKKVLLLLWKVVMFTLGGFEHLQTLKVQKRAELGLPPLAEDSIQVVKSMRAASPPSYTLDLGESQLAPPPSKLRGRRGSRRQLLTKQDSLDIYNERDLFKTEEPATEEEEESAGDGERTLDGELDLLEQDPLVPPPPSQAPLSAERVAFPKGLPWAPKVRQKDIEHFLEMSRNKFIGFTLGQDTDTLVGLPRPIHESVKTLKQHKYISIADVQIKNEEELEKCPMSLGEEVVPETPCEILYQGMLYSLPQYMIALLKILLAAAPTSKAKTDSINILADVLPEEMPITVLQSMKLGIDVNRHKEIIVKSISTLLLLLLKHFKLNHIYQFEYVSQHLVFANCIPLILKFFNQNILSYITAKNSISVLDYPCCTIQDLPELTTESLEAGDNSQFCWRNLFSCINLLRLLNKLTKWKHSRTMMLVVFKSAPILKRALKVKQAMLQLYVLKLLKLQTKYLGRQWRKSNMKTMSAIYQKVRHRMNDDWAYGNDIDARPWDFQAEECTLRANIEAFNSRRYDRPQDSEFSPVDNCLQSVLGQRLDLPEDFHYSYELWLEREVFSQPICWEELLQNH.

A disordered region spans residues 1–48; that stretch reads MEDPAAPGTGGPPANGNGNGGGKGKQAAPKGREAFRSQRRESEGSVDC. Over residues 8 to 24 the composition is skewed to gly residues; the sequence is GTGGPPANGNGNGGGKG. Residues 30–43 show a composition bias toward basic and acidic residues; that stretch reads KGREAFRSQRRESE. A phosphoserine mark is found at Ser318, Ser329, and Ser354. Positions 321 to 345 are disordered; that stretch reads SYTLDLGESQLAPPPSKLRGRRGSR. The disordered stretch occupies residues 360 to 382; the sequence is ERDLFKTEEPATEEEEESAGDGE. Residues 369 to 379 show a composition bias toward acidic residues; it reads PATEEEEESAG.

Belongs to the STRIP family. As to quaternary structure, part of the core of STRIPAK complexes composed of PP2A catalytic and scaffolding subunits, the striatins (PP2A regulatory subunits), the striatin-associated proteins MOB4, STRIP1 and STRIP2, PDCD10 and members of the STE20 kinases, such as STK24 and STK26. Interacts with CTTNBP2NL.

Its subcellular location is the cytoplasm. Plays a role in the regulation of cell morphology and cytoskeletal organization. Required in the control of cell shape. Calmodulin-binding scaffolding protein which is the center of the striatin-interacting phosphatase and kinase (STRIPAK) complexes. STRIPAK complexes have critical roles in protein (de)phosphorylation and are regulators of multiple signaling pathways including Hippo, MAPK, nuclear receptor and cytoskeleton remodeling. Different types of STRIPAK complexes are involved in a variety of biological processes such as cell growth, differentiation, apoptosis, metabolism and immune regulation. This Homo sapiens (Human) protein is Striatin-interacting protein 2.